A 61-amino-acid polypeptide reads, in one-letter code: Sodium/potassium-transporting ATPase subunit gamma (61 aa).

A helical transmembrane segment spans residues 24–44; that stretch reads KGGLIFAAIAFVVGMLIIFSG.

This sequence belongs to the FXYD family. In terms of assembly, regulatory subunit of the sodium/potassium-transporting ATPase which is composed of a catalytic alpha subunit, an auxiliary non-catalytic beta subunit and an additional regulatory subunit.

It localises to the membrane. Functionally, may be involved in forming the receptor site for cardiac glycoside binding or may modulate the transport function of the sodium ATPase. This is Sodium/potassium-transporting ATPase subunit gamma (fxyd2) from Xenopus laevis (African clawed frog).